A 30-amino-acid chain; its full sequence is Ornithine carbamoyltransferase (30 aa).

This sequence belongs to the aspartate/ornithine carbamoyltransferase superfamily. OTCase family.

The protein resides in the cytoplasm. It carries out the reaction carbamoyl phosphate + L-ornithine = L-citrulline + phosphate + H(+). It participates in amino-acid biosynthesis; L-arginine biosynthesis; L-arginine from L-ornithine and carbamoyl phosphate: step 1/3. Its function is as follows. Has vitronectin and fibronectin-binding activity. This Staphylococcus epidermidis protein is Ornithine carbamoyltransferase (argF).